The following is a 279-amino-acid chain: Tumor necrosis factor ligand superfamily member 6 (279 aa).

The Cytoplasmic portion of the chain corresponds to 1 to 78; it reads MQQPMNYPCP…PLKKKDHNTN (78 aa). The segment at 30 to 70 is disordered; that stretch reads FPCPSCGPRGPDQRRPPPPPPPVSPLPPPSQPLPLPPLTPL. Over residues 45 to 68 the composition is skewed to pro residues; sequence PPPPPPPVSPLPPPSQPLPLPPLT. The chain crosses the membrane as a helical; Signal-anchor for type II membrane protein span at residues 79–100; that stretch reads LWLPVVFFMVLVALVGMGLGMY. Residues 101–279 are Extracellular-facing; sequence QLFHLQKELA…SKTFFGLYKL (179 aa). N-linked (GlcNAc...) asparagine glycosylation is present at N117. A compositionally biased stretch (polar residues) spans 126–135; it reads EKQIANPSTP. The interval 126 to 150 is disordered; it reads EKQIANPSTPSEKKEPRSVAHLTGN. The THD domain maps to 143-279; that stretch reads SVAHLTGNPH…SKTFFGLYKL (137 aa). A glycan (N-linked (GlcNAc...) asparagine) is linked at N182. C200 and C231 form a disulfide bridge. N248 and N258 each carry an N-linked (GlcNAc...) asparagine glycan.

The protein belongs to the tumor necrosis factor family. In terms of assembly, homotrimer. Interacts with ARHGAP9, BAIAP2L1, BTK, CACNB3, CACNB4, CRK, DLG2, DNMBP, DOCK4, EPS8L3, FGR, FYB1, FYN, HCK, ITK, ITSN2, KALRN, LYN, MACC1, MIA, MPP4, MYO15A, NCF1, NCK1, NCK2, NCKIPSD, OSTF1, PIK3R1, PSTPIP1, RIMBP3C, SAMSN1, SH3GL3, SH3PXD2B, SH3PXD2A, SH3RF2, SKAP2, SNX33, SNX9, SORBS3, SPTA1, SRC, SRGAP1, SRGAP2, SRGAP3, TEC, TJP3 and YES1. The soluble form derives from the membrane form by proteolytic processing. The membrane-bound form undergoes two successive intramembrane proteolytic cleavages. The first one is processed by ADAM10 producing an N-terminal fragment, which lacks the receptor-binding extracellular domain. This ADAM10-processed FasL (FAsL APL) remnant form is still membrane anchored and further processed by SPPL2A that liberates the FasL intracellular domain (FasL ICD). FasL shedding by ADAM10 is a prerequisite for subsequent intramembrane cleavage by SPPL2A in T-cells. In terms of processing, phosphorylated by FGR on tyrosine residues; this is required for ubiquitination and subsequent internalization. Post-translationally, N-glycosylated. Glycosylation enhances apoptotic activity. Monoubiquitinated. As to expression, expressed in T-cells. Expressed in natural killer cells.

It is found in the cell membrane. It localises to the cytoplasmic vesicle lumen. The protein localises to the lysosome lumen. Its subcellular location is the secreted. The protein resides in the nucleus. Functionally, cytokine that binds to TNFRSF6/FAS, a receptor that transduces the apoptotic signal into cells. Involved in cytotoxic T-cell-mediated apoptosis, natural killer cell-mediated apoptosis and in T-cell development. Initiates fratricidal/suicidal activation-induced cell death (AICD) in antigen-activated T-cells contributing to the termination of immune responses. TNFRSF6/FAS-mediated apoptosis also has a role in the induction of peripheral tolerance. Binds to TNFRSF6B/DcR3, a decoy receptor that blocks apoptosis. Induces FAS-mediated activation of NF-kappa-B, initiating non-apoptotic signaling pathways. Can induce apoptosis but does not appear to be essential for this process. In terms of biological role, cytoplasmic form induces gene transcription inhibition. This Mus musculus (Mouse) protein is Tumor necrosis factor ligand superfamily member 6 (Faslg).